We begin with the raw amino-acid sequence, 89 residues long: uncharacterized protein (89 aa).

The signal sequence occupies residues 1 to 27; sequence MKKAAAVLLSLGLVFGFSYGAGHVAEA.

This is an uncharacterized protein from Bacillus subtilis (strain 168).